Here is a 295-residue protein sequence, read N- to C-terminus: UTP--glucose-1-phosphate uridylyltransferase (295 aa).

Belongs to the UDPGP type 2 family.

The enzyme catalyses alpha-D-glucose 1-phosphate + UTP + H(+) = UDP-alpha-D-glucose + diphosphate. Its function is as follows. May play a role in stationary phase survival. This Haemophilus ducreyi (strain 35000HP / ATCC 700724) protein is UTP--glucose-1-phosphate uridylyltransferase (galU).